The sequence spans 191 residues: UPF0228 protein MM_1428 (191 aa).

It belongs to the UPF0228 family.

The protein is UPF0228 protein MM_1428 of Methanosarcina mazei (strain ATCC BAA-159 / DSM 3647 / Goe1 / Go1 / JCM 11833 / OCM 88) (Methanosarcina frisia).